We begin with the raw amino-acid sequence, 390 residues long: Odorant receptor 85b (390 aa).

At 1 to 30 (MEKLMKYASFFYTAVGIRPYTNGEESKMNK) the chain is on the cytoplasmic side. A helical transmembrane segment spans residues 31 to 51 (LIFHIVFWSNVINLSFVGLFE). Over 52-66 (SIYVYSAFMDNKFLE) the chain is Extracellular. The helical transmembrane segment at 67 to 87 (AVTALSYIGFVTVGMSKMFFI) threads the bilayer. The Cytoplasmic portion of the chain corresponds to 88 to 126 (RWKKTAITELINELKEIYPNGLIREERYNLPMYLGTCSR). A helical membrane pass occupies residues 127-147 (ISLIYSLLYSVLIWTFNLFCV). The Extracellular segment spans residues 148-200 (MEYWVYDKWLNIRVVGKQLPYLMYIPWKWQDNWSYYPLLFSQNFAGYTSAAGQ). An N-linked (GlcNAc...) asparagine glycan is attached at Asn-179. A helical transmembrane segment spans residues 201–221 (ISTDVLLCAVATQLVMHFDFL). Topologically, residues 222 to 260 (SNSMERHELSGDWKKDSRFLVDIVRYHERILRLSDAVND) are cytoplasmic. Residues 261 to 281 (IFGIPLLLNFMVSSFVICFVG) form a helical membrane-spanning segment. The Extracellular portion of the chain corresponds to 282-291 (FQMTVGVPPD). The helical transmembrane segment at 292-312 (IVVKLFLFLVSSMSQVYLICH) threads the bilayer. At 313–360 (YGQLVADASYGFSVATYNQKWYKADVRYKRALVIIIARSQKVTFLKAT) the chain is on the cytoplasmic side. Residues 361–381 (IFLDITRSTMTDLLQISYKFF) form a helical membrane-spanning segment. Residues 382–390 (ALLRTMYTQ) lie on the Extracellular side of the membrane.

This sequence belongs to the insect chemoreceptor superfamily. Heteromeric odorant receptor channel (TC 1.A.69) family. Or49a subfamily. As to quaternary structure, interacts with Orco. Complexes exist early in the endomembrane system in olfactory sensory neurons (OSNs), coupling these complexes to the conserved ciliary trafficking pathway. In terms of tissue distribution, expressed in olfactory sensory neurons in the antenna.

It is found in the cell membrane. In terms of biological role, odorant receptor which mediates acceptance or avoidance behavior, depending on its substrates. The odorant receptor repertoire encodes a large collection of odor stimuli that vary widely in identity, intensity, and duration. Forms a complex with Orco to form odorant-sensing units, providing sensitive and prolonged odorant signaling and calcium permeability. Involved in the behavioral responses to 2-heptanone, amyl acetate, and butyl acetate. This Drosophila melanogaster (Fruit fly) protein is Odorant receptor 85b (Or85b).